We begin with the raw amino-acid sequence, 329 residues long: Malate dehydrogenase (329 aa).

12 to 18 (GAAGQIG) is an NAD(+) binding site. Substrate contacts are provided by R93 and R99. Residues N106, Q113, and 130-132 (TGN) each bind NAD(+). Residues N132 and R163 each coordinate substrate. H188 (proton acceptor) is an active-site residue.

The protein belongs to the LDH/MDH superfamily. MDH type 2 family.

It catalyses the reaction (S)-malate + NAD(+) = oxaloacetate + NADH + H(+). In terms of biological role, catalyzes the reversible oxidation of malate to oxaloacetate. The polypeptide is Malate dehydrogenase (Mycolicibacterium paratuberculosis (strain ATCC BAA-968 / K-10) (Mycobacterium paratuberculosis)).